Here is a 701-residue protein sequence, read N- to C-terminus: Kinesin-like protein KIN-10C (701 aa).

The Kinesin motor domain occupies 8–318; the sequence is VVRVVARVKP…LNLASRICLG (311 aa). ATP is bound at residue 94-101; sequence GARNSGKT.

This sequence belongs to the TRAFAC class myosin-kinesin ATPase superfamily. Kinesin family. KIN-10 subfamily.

The protein is Kinesin-like protein KIN-10C of Arabidopsis thaliana (Mouse-ear cress).